Consider the following 928-residue polypeptide: Arf guanine nucleotide exchange factor sec74 (928 aa).

Composition is skewed to polar residues over residues 1-12 (MDESSRIASSSA) and 57-83 (TITSDTPKVSSQHSPVSSAYTGDSTTD). Disordered stretches follow at residues 1–152 (MDES…RPSS) and 227–249 (SLSSNFSARTPASNQSSVSEDFG). A Phosphoserine modification is found at S67. 2 stretches are compositionally biased toward low complexity: residues 89–102 (GHSSSQKLSNKVSS) and 115–132 (SKSSSSQCSSPFLPTSSS). The SEC7 domain maps to 228 to 420 (LSSNFSARTP…ECFYDNITYT (193 aa)). The span at 234–245 (ARTPASNQSSVS) shows a compositional bias: polar residues. The region spanning 548 to 677 (KVFKLGILIQ…WLVKINFVST (130 aa)) is the PH domain.

The protein localises to the cytoplasm. Its subcellular location is the cell tip. Functionally, guanine nucleotide exchange factor for Arf GTPases, stimulating the nucleotide exchange from the GDP-bound to the GTP-bound form. Involved in vesicular transport. In Schizosaccharomyces pombe (strain 972 / ATCC 24843) (Fission yeast), this protein is Arf guanine nucleotide exchange factor sec74 (sec74).